Reading from the N-terminus, the 132-residue chain is uncharacterized protein (132 aa).

Functionally, the presence of the two linear plasmids, termed pGKL1 and pGKL2, in strains of Kluyveromyces lactis confers the killer phenotype to the host cell, by promoting the secretion of a toxin able to inhibit the growth of sensitive strains. This is an uncharacterized protein from Kluyveromyces lactis (strain ATCC 8585 / CBS 2359 / DSM 70799 / NBRC 1267 / NRRL Y-1140 / WM37) (Yeast).